The primary structure comprises 210 residues: Protein GET1 (210 aa).

Over 1-4 (MPSL) the chain is Lumenal. The helical transmembrane segment at 5–24 (LIIVLIIHVVTYLINTIGAN) threads the bilayer. Residues 25–110 (TIDSLLWLLY…SFDLAVKSVR (86 aa)) are Cytoplasmic-facing. A coiled-coil region spans residues 39 to 95 (NQTSQTADEQRRLKREVMQLKREMNATSSQDEFAKWAKLRRRHDKTMEEYEAKNKAL). A helical transmembrane segment spans residues 111–131 (FFSTTGLKLFLQFWFSKTPIF). Over 132–155 (ELPRGWIPWQVEWVLSFPRAPLGT) the chain is Lumenal. The helical transmembrane segment at 156–172 (VSIQIWGGVCATVVSLA) threads the bilayer. At 173–210 (GDAIGVVNVYLTSKAPKQKEPATSGENSARPMAIKKEL) the chain is on the cytoplasmic side. The tract at residues 189-210 (KQKEPATSGENSARPMAIKKEL) is disordered.

This sequence belongs to the WRB/GET1 family. Interacts with GET3.

Its subcellular location is the endoplasmic reticulum membrane. Functionally, required for the post-translational delivery of tail-anchored (TA) proteins to the endoplasmic reticulum. Acts as a membrane receptor for soluble GET3, which recognizes and selectively binds the transmembrane domain of TA proteins in the cytosol. The sequence is that of Protein GET1 from Coccidioides posadasii (strain C735) (Valley fever fungus).